Here is a 292-residue protein sequence, read N- to C-terminus: Elongation factor Ts (292 aa).

Positions 79-82 (TDFV) are involved in Mg(2+) ion dislocation from EF-Tu.

It belongs to the EF-Ts family.

The protein localises to the cytoplasm. In terms of biological role, associates with the EF-Tu.GDP complex and induces the exchange of GDP to GTP. It remains bound to the aminoacyl-tRNA.EF-Tu.GTP complex up to the GTP hydrolysis stage on the ribosome. This is Elongation factor Ts from Metamycoplasma arthritidis (strain 158L3-1) (Mycoplasma arthritidis).